The chain runs to 180 residues: Large ribosomal subunit protein uL15 (180 aa).

The tract at residues 1–62 is disordered; sequence MKKERLEQAS…KTAGRGSKGQ (62 aa).

This sequence belongs to the universal ribosomal protein uL15 family. As to quaternary structure, part of the 50S ribosomal subunit.

Its function is as follows. Binds to the 23S rRNA. This chain is Large ribosomal subunit protein uL15, found in Leptospira interrogans serogroup Icterohaemorrhagiae serovar copenhageni (strain Fiocruz L1-130).